A 371-amino-acid chain; its full sequence is tRNA-specific 2-thiouridylase MnmA (371 aa).

ATP-binding positions include 13 to 20 and methionine 39; that span reads GMSGGVDS. The tract at residues 99–101 is interaction with target base in tRNA; sequence NPD. Cysteine 104 serves as the catalytic Nucleophile. An intrachain disulfide couples cysteine 104 to cysteine 200. Residue glycine 128 participates in ATP binding. The tract at residues 150–152 is interaction with tRNA; sequence KDQ. The active-site Cysteine persulfide intermediate is cysteine 200. The segment at 308–309 is interaction with tRNA; it reads RY.

Belongs to the MnmA/TRMU family.

The protein resides in the cytoplasm. The catalysed reaction is S-sulfanyl-L-cysteinyl-[protein] + uridine(34) in tRNA + AH2 + ATP = 2-thiouridine(34) in tRNA + L-cysteinyl-[protein] + A + AMP + diphosphate + H(+). In terms of biological role, catalyzes the 2-thiolation of uridine at the wobble position (U34) of tRNA, leading to the formation of s(2)U34. The sequence is that of tRNA-specific 2-thiouridylase MnmA from Bacillus cereus (strain ATCC 14579 / DSM 31 / CCUG 7414 / JCM 2152 / NBRC 15305 / NCIMB 9373 / NCTC 2599 / NRRL B-3711).